Reading from the N-terminus, the 306-residue chain is MPHSLRIGTRASPLAVWQAEHVRAALLRLHPGMAVEIITMTTSGDVLLDAPLHALGGKGLFVKEIEDALQQRRVDVAVHSMKDVPALQPDGLEIVAIMAREDVRDAFVSNTFLHPDALPEGARVGSSSLRRRAQLLERYPHLRVEDLRGNVATRLRRLDEGHYDAIILAAAGLKRLGLPDRITHLLDIDRSLPAVGQGAIGIEARSDDRRTRELLAPLADADTQNCVLAERSMNQVLGGDCRLPVAALARWQGPQMLLRGLVATPDGRRVLHAEAKGSDPVALGMAVAAALVAQGAAEIIEDVRNA.

Cys-241 is subject to S-(dipyrrolylmethanemethyl)cysteine.

This sequence belongs to the HMBS family. As to quaternary structure, monomer. It depends on dipyrromethane as a cofactor.

The enzyme catalyses 4 porphobilinogen + H2O = hydroxymethylbilane + 4 NH4(+). The protein operates within porphyrin-containing compound metabolism; protoporphyrin-IX biosynthesis; coproporphyrinogen-III from 5-aminolevulinate: step 2/4. Tetrapolymerization of the monopyrrole PBG into the hydroxymethylbilane pre-uroporphyrinogen in several discrete steps. The chain is Porphobilinogen deaminase from Acidithiobacillus ferrooxidans (strain ATCC 23270 / DSM 14882 / CIP 104768 / NCIMB 8455) (Ferrobacillus ferrooxidans (strain ATCC 23270)).